A 388-amino-acid polypeptide reads, in one-letter code: Muscleblind-like protein 1 (388 aa).

The residue at position 6 (threonine 6) is a Phosphothreonine. C3H1-type zinc fingers lie at residues 13-41 (WLTL…HPSK), 47-73 (NGRV…HPPP), 179-207 (TDRL…HPAD), and 215-241 (DNTV…HPPA).

Belongs to the muscleblind family. As to quaternary structure, interacts with DDX1 and YBX1. Interacts with HNRNPH1; the interaction in RNA-independent. Interacts with RBPMS; the interaction allows cooperative assembly of RNA-bound stable cell-specific alternative splicing regulatory complexes. In terms of tissue distribution, highly expressed in cardiac, skeletal muscle and during myoblast differentiation. Weakly expressed in other tissues (at protein level). Expressed in heart, brain, placenta, lung, liver, skeletal muscle, kidney and pancreas.

Its subcellular location is the nucleus. It is found in the cytoplasm. The protein resides in the cytoplasmic granule. Its function is as follows. Mediates pre-mRNA alternative splicing regulation. Acts either as activator or repressor of splicing on specific pre-mRNA targets. Inhibits cardiac troponin-T (TNNT2) pre-mRNA exon inclusion but induces insulin receptor (IR) pre-mRNA exon inclusion in muscle. Antagonizes the alternative splicing activity pattern of CELF proteins. Regulates the TNNT2 exon 5 skipping through competition with U2AF2. Inhibits the formation of the spliceosome A complex on intron 4 of TNNT2 pre-mRNA. Binds to the stem-loop structure within the polypyrimidine tract of TNNT2 intron 4 during spliceosome assembly. Binds to the 5'-YGCU(U/G)Y-3'consensus sequence. Binds to the IR RNA. Binds to expanded CUG repeat RNA, which folds into a hairpin structure containing GC base pairs and bulged, unpaired U residues. Together with RNA binding proteins RBPMS and RBFOX2, activates vascular smooth muscle cells alternative splicing events. Regulates NCOR2 alternative splicing. In Homo sapiens (Human), this protein is Muscleblind-like protein 1 (MBNL1).